Reading from the N-terminus, the 226-residue chain is ATP synthase subunit a (226 aa).

6 consecutive transmembrane segments (helical) span residues 17-37 (FSYF…AMMA), 79-99 (LVAT…LPGF), 105-125 (SLNL…FEGI), 134-154 (FAHF…IEIV), 176-196 (LFLM…AYVL), and 199-219 (FMAF…LAGA).

This sequence belongs to the ATPase A chain family. As to quaternary structure, F-type ATPases have 2 components, CF(1) - the catalytic core - and CF(0) - the membrane proton channel. CF(1) has five subunits: alpha(3), beta(3), gamma(1), delta(1), epsilon(1). CF(0) has three main subunits: a(1), b(2) and c(9-12). The alpha and beta chains form an alternating ring which encloses part of the gamma chain. CF(1) is attached to CF(0) by a central stalk formed by the gamma and epsilon chains, while a peripheral stalk is formed by the delta and b chains.

Its subcellular location is the cell inner membrane. Functionally, key component of the proton channel; it plays a direct role in the translocation of protons across the membrane. In Campylobacter jejuni subsp. doylei (strain ATCC BAA-1458 / RM4099 / 269.97), this protein is ATP synthase subunit a.